We begin with the raw amino-acid sequence, 746 residues long: EF-hand domain-containing family member C2 (746 aa).

DM10 domains are found at residues 75 to 182 (DKQV…RKMG), 226 to 367 (DGHV…RTKY), and 429 to 536 (ESNT…EKHA). In terms of domain architecture, EF-hand spans 557–592 (PRSREIRQVFAAADPQHTKVIEYDPFRNLIVSITDG).

The protein resides in the cytoplasm. Its subcellular location is the cytoskeleton. It localises to the cilium axoneme. Its function is as follows. Microtubule inner protein (MIP) part of the dynein-decorated doublet microtubules (DMTs) in cilia axoneme, which is required for motile cilia beating. The protein is EF-hand domain-containing family member C2 (EFHC2) of Gallus gallus (Chicken).